The following is a 213-amino-acid chain: MMNEAALANMIPYDTIGLYEQPKPRFIFKMPRVVPDQKSKFESDELFRRLSRESEVRYTGYRERSIEERQVRFMNGCREGHTEASFVASGTNLQLVFNANQNPYLHDKECDFDKEHGKVHIKSYFIMNGVCVRFRGWIDLERLDGVGCLEYDERRAMHEDAILRDQIDRYNQRLREFEDTKRAYRDNRQDEMEAVRRGVASGGIGVGASMWRR.

It belongs to the CBF-beta family.

Its subcellular location is the nucleus. Its function is as follows. Regulates the DNA-binding properties of Runt. The sequence is that of Protein big brother (Bgb) from Drosophila melanogaster (Fruit fly).